The primary structure comprises 325 residues: Ribosomal RNA small subunit methyltransferase H (325 aa).

S-adenosyl-L-methionine-binding positions include 38–40 (GGY), Asp55, Phe82, Asp103, and Gln110. Disordered stretches follow at residues 256–275 (SGGD…AARA) and 281–307 (PARK…RSAV).

It belongs to the methyltransferase superfamily. RsmH family.

It localises to the cytoplasm. It carries out the reaction cytidine(1402) in 16S rRNA + S-adenosyl-L-methionine = N(4)-methylcytidine(1402) in 16S rRNA + S-adenosyl-L-homocysteine + H(+). In terms of biological role, specifically methylates the N4 position of cytidine in position 1402 (C1402) of 16S rRNA. In Sphingopyxis alaskensis (strain DSM 13593 / LMG 18877 / RB2256) (Sphingomonas alaskensis), this protein is Ribosomal RNA small subunit methyltransferase H.